An 88-amino-acid polypeptide reads, in one-letter code: L-amino-acid oxidase (88 aa).

Residues glutamate 74 and 81 to 86 (GWIDST) each bind FAD. 81–82 (GW) is a binding site for substrate.

The protein belongs to the flavin monoamine oxidase family. FIG1 subfamily. In terms of assembly, homodimer; non-covalently linked. FAD serves as cofactor. Post-translationally, N-glycosylated. Expressed by the venom gland.

Its subcellular location is the secreted. It carries out the reaction an L-alpha-amino acid + O2 + H2O = a 2-oxocarboxylate + H2O2 + NH4(+). The catalysed reaction is L-leucine + O2 + H2O = 4-methyl-2-oxopentanoate + H2O2 + NH4(+). The enzyme catalyses L-phenylalanine + O2 + H2O = 3-phenylpyruvate + H2O2 + NH4(+). It catalyses the reaction L-tryptophan + O2 + H2O = indole-3-pyruvate + H2O2 + NH4(+). It carries out the reaction L-methionine + O2 + H2O = 4-methylsulfanyl-2-oxobutanoate + H2O2 + NH4(+). The catalysed reaction is L-isoleucine + O2 + H2O = (S)-3-methyl-2-oxopentanoate + H2O2 + NH4(+). The enzyme catalyses L-arginine + O2 + H2O = 5-guanidino-2-oxopentanoate + H2O2 + NH4(+). It catalyses the reaction L-histidine + O2 + H2O = 3-(imidazol-5-yl)pyruvate + H2O2 + NH4(+). It carries out the reaction L-asparagine + O2 + H2O = 2-oxosuccinamate + H2O2 + NH4(+). The catalysed reaction is L-valine + O2 + H2O = 3-methyl-2-oxobutanoate + H2O2 + NH4(+). The enzyme catalyses L-glutamate + O2 + H2O = H2O2 + 2-oxoglutarate + NH4(+). In terms of biological role, catalyzes an oxidative deamination of predominantly hydrophobic and aromatic L-amino acids, thus producing hydrogen peroxide that may contribute to the diverse toxic effects of this enzyme. Is highly active on L-Met, L-Leu, L-Phe, L-Ile, and L-Arg, moderately active on L-His, L-Trp, L-Asn, L-Glu, and L-Val, and weakly or not active on L-Gln, L-Lys, L-Asp, L-Ala, L-Tyr, L-Ser, L-Pro, L-Gly, L-Thr, and L-Cys. Exhibits diverse biological activities, such as hemorrhage, hemolysis, edema, apoptosis of vascular endothelial cells or tumor cell lines, antibacterial and antiparasitic activities. In addition, this protein has an ability to induce apoptosis in cultured HeLa and K562 cells, and inhibits ADP-induced platelet aggregation dose-dependently. Effects of snake L-amino oxidases on platelets are controversial, since they either induce aggregation or inhibit agonist-induced aggregation. These different effects are probably due to different experimental conditions. This chain is L-amino-acid oxidase, found in Vipera berus berus (Common viper).